A 216-amino-acid chain; its full sequence is V-type ATP synthase subunit D (216 aa).

It belongs to the V-ATPase D subunit family.

Functionally, produces ATP from ADP in the presence of a proton gradient across the membrane. This chain is V-type ATP synthase subunit D, found in Clostridium novyi (strain NT).